The primary structure comprises 142 residues: Large ribosomal subunit protein uL13 (142 aa).

This sequence belongs to the universal ribosomal protein uL13 family. As to quaternary structure, part of the 50S ribosomal subunit.

This protein is one of the early assembly proteins of the 50S ribosomal subunit, although it is not seen to bind rRNA by itself. It is important during the early stages of 50S assembly. In Baumannia cicadellinicola subsp. Homalodisca coagulata, this protein is Large ribosomal subunit protein uL13.